A 162-amino-acid polypeptide reads, in one-letter code: Endoribonuclease YbeY (162 aa).

Zn(2+) is bound by residues H117, H121, and H127.

The protein belongs to the endoribonuclease YbeY family. The cofactor is Zn(2+).

Its subcellular location is the cytoplasm. Single strand-specific metallo-endoribonuclease involved in late-stage 70S ribosome quality control and in maturation of the 3' terminus of the 16S rRNA. This is Endoribonuclease YbeY from Francisella tularensis subsp. holarctica (strain OSU18).